A 148-amino-acid polypeptide reads, in one-letter code: Small ribosomal subunit protein eS6 (148 aa).

It belongs to the eukaryotic ribosomal protein eS6 family.

The chain is Small ribosomal subunit protein eS6 from Pyrobaculum islandicum (strain DSM 4184 / JCM 9189 / GEO3).